A 928-amino-acid polypeptide reads, in one-letter code: Arf guanine nucleotide exchange factor sec74 (928 aa).

Composition is skewed to polar residues over residues 1–12 (MDESSRIASSSA) and 57–83 (TITS…STTD). 2 disordered regions span residues 1-152 (MDES…RPSS) and 227-249 (SLSS…EDFG). Residue Ser-67 is modified to Phosphoserine. 2 stretches are compositionally biased toward low complexity: residues 89–102 (GHSS…KVSS) and 115–132 (SKSS…TSSS). Residues 228–420 (LSSNFSARTP…ECFYDNITYT (193 aa)) enclose the SEC7 domain. A compositionally biased stretch (polar residues) spans 234-245 (ARTPASNQSSVS). In terms of domain architecture, PH spans 548-677 (KVFKLGILIQ…WLVKINFVST (130 aa)).

The protein localises to the cytoplasm. It localises to the cell tip. Functionally, guanine nucleotide exchange factor for Arf GTPases, stimulating the nucleotide exchange from the GDP-bound to the GTP-bound form. Involved in vesicular transport. This is Arf guanine nucleotide exchange factor sec74 (sec74) from Schizosaccharomyces pombe (strain 972 / ATCC 24843) (Fission yeast).